Reading from the N-terminus, the 91-residue chain is Small integral membrane protein 12-B (91 aa).

A helical transmembrane segment spans residues Tyr12–Phe34.

The protein belongs to the SMIM12 family.

The protein localises to the membrane. In Xenopus laevis (African clawed frog), this protein is Small integral membrane protein 12-B (smim12-b).